The sequence spans 247 residues: Transmembrane protein 33 (247 aa).

The residue at position 2 (Ala2) is an N-acetylalanine. The Lumenal portion of the chain corresponds to 2–31 (ADTTPNGPQGAGAVQFMMTNKLDTAMWLSR). The helical transmembrane segment at 32 to 52 (LFTVYCSALFVLPLLGLHEAA) threads the bilayer. Topologically, residues 53–100 (SFYQRALLANALTSALRLHQRLPHFQLSRAFLAQALLEDSCHYLLYSL) are cytoplasmic. The chain crosses the membrane as a helical span at residues 101 to 121 (IFVNSYPVTMSIFPVLLFSLL). Residues 122-155 (HAATYTKKVLDARGSNSLPLLRSVLDKLSANQQN) lie on the Lumenal side of the membrane. A helical transmembrane segment spans residues 156–176 (ILKFIACNEIFLMPATVFMLF). The Cytoplasmic segment spans residues 177 to 247 (SGQGSLLQPF…FISRLAPTVP (71 aa)).

It belongs to the PER33/POM33 family. Interacts with EIF2AK3. Interacts with ARL6IP1, isoform RTN1-A of RTN1, isoform RTN2-B of RTN2, isoform 3 of RTN3 and isoform 3 of RTN4. Interacts with RNF5. Interacts with RNF26. Interacts with PKD2. Prostate cancer and several cancer cell lines (at protein level). Widely expressed. Expressed at higher levels in endocrine-resistant breast cancer cells as compared to endocrine-sensitive breast cancer cells. Expressed at higher levels in early recurrence breast cancer tissues as compared to non-recurrent breast tumors.

It is found in the endoplasmic reticulum membrane. The protein localises to the melanosome. It localises to the nucleus envelope. Acts as a regulator of the tubular endoplasmic reticulum (ER) network by modulating intracellular calcium homeostasis. Mechanistically, stimulates PKD2 calcium-dependent activity. Suppresses the RTN3/4-induced formation of the ER tubules. Positively regulates PERK-mediated and IRE1-mediated unfolded protein response signaling. Plays an essential role in VEGF-mediated release of Ca(2+) from ER stores during angiogenesis. Also plays a role in the modulation of innate immune signaling through the cGAS-STING pathway by interacting with RNF26. Participates in lipid metabolism by acting as a downstream effector of the pyruvate kinase/PKM. Forms a complex with RNF5 to facilitate polyubiquitination and subsequent degradation of SCAP on the ER membrane. In Homo sapiens (Human), this protein is Transmembrane protein 33 (TMEM33).